A 370-amino-acid polypeptide reads, in one-letter code: tRNA-specific 2-thiouridylase MnmA (370 aa).

ATP contacts are provided by residues 9-16 (GISGGVDS) and Met35. Positions 107 to 109 (NPD) are interaction with target base in tRNA. The active-site Nucleophile is Cys112. A disulfide bridge connects residues Cys112 and Cys209. Gly137 serves as a coordination point for ATP. Residues 159–161 (KDQ) form an interaction with tRNA region. Cys209 serves as the catalytic Cysteine persulfide intermediate.

This sequence belongs to the MnmA/TRMU family.

It localises to the cytoplasm. It catalyses the reaction S-sulfanyl-L-cysteinyl-[protein] + uridine(34) in tRNA + AH2 + ATP = 2-thiouridine(34) in tRNA + L-cysteinyl-[protein] + A + AMP + diphosphate + H(+). In terms of biological role, catalyzes the 2-thiolation of uridine at the wobble position (U34) of tRNA, leading to the formation of s(2)U34. The chain is tRNA-specific 2-thiouridylase MnmA from Mycoplasma pneumoniae (strain ATCC 29342 / M129 / Subtype 1) (Mycoplasmoides pneumoniae).